Consider the following 221-residue polypeptide: Oxaloacetate tautomerase FAHD1, mitochondrial (221 aa).

The transit peptide at M1 to Y24 directs the protein to the mitochondrion. S37 is modified (phosphoserine). Residues E68, E70, and D99 each coordinate Mg(2+). Residue K110 is modified to N6-acetyllysine. N6-succinyllysine is present on K112.

Belongs to the FAH family. In terms of assembly, homodimer. It depends on Mg(2+) as a cofactor. Mn(2+) serves as cofactor.

It is found in the mitochondrion. The protein localises to the cytoplasm. It localises to the cytosol. It catalyses the reaction oxaloacetate = enol-oxaloacetate. It carries out the reaction oxaloacetate + H(+) = pyruvate + CO2. The catalysed reaction is a 3-acylpyruvate + H2O = a carboxylate + pyruvate + H(+). The enzyme catalyses acetylpyruvate + H2O = acetate + pyruvate + H(+). It catalyses the reaction 3-fumarylpyruvate + H2O = fumarate + pyruvate + H(+). With respect to regulation, oxaloacetate decarboxylation is competitively inhibited by oxalate. Its function is as follows. Tautomerase that converts enol-oxaloacetate, a strong inhibitor of succinate dehydrogenase, to the physiological keto form of oxaloacetate. It is thereby required to maximize aerobic respiration efficiency by preventing succinate dehydrogenase inhibition. Also acts as a weak oxaloacetate decarboxylase (ODx), catalyzing the decarboxylation of oxaloacetate (OAA) to pyruvate and CO(2), and as such is likely a regulatory enzyme in the TCA cycle. Also displays acylpyruvase activity, being able to hydrolyze acetylpyruvate and fumarylpyruvate in vitro. This chain is Oxaloacetate tautomerase FAHD1, mitochondrial, found in Rattus norvegicus (Rat).